We begin with the raw amino-acid sequence, 507 residues long: Histidine ammonia-lyase (507 aa).

The 5-imidazolinone (Ala-Gly) cross-link spans 141–143; the sequence is ASG. Ser-142 is subject to 2,3-didehydroalanine (Ser).

The protein belongs to the PAL/histidase family. In terms of processing, contains an active site 4-methylidene-imidazol-5-one (MIO), which is formed autocatalytically by cyclization and dehydration of residues Ala-Ser-Gly.

It localises to the cytoplasm. It catalyses the reaction L-histidine = trans-urocanate + NH4(+). Its pathway is amino-acid degradation; L-histidine degradation into L-glutamate; N-formimidoyl-L-glutamate from L-histidine: step 1/3. This Burkholderia cenocepacia (strain HI2424) protein is Histidine ammonia-lyase.